A 435-amino-acid chain; its full sequence is MEERTFSRPAASATVLVGTQFGDEGKGKLVDYLSDQYDIVVRYQGGANAGHTICFDGKTVVLHLIPSGIFNKDCICVIGNGVVIDPNALMEEIQKVEELGYDVKGRLFISHNAHLIMPYHKRLDSLSESCLSGDQKIGTTGRGIGPSYEDKFARHGIRVVDLLNPKVLEEKLRDNIEAKNKLICKVYEKEEIDVDAIIGEYEAFDKVIDPYVTNTQLYLNRQIKAGKTVLLEGAQGCLLDVDHGTYPFVTSSNPTSGGACTGSGVAPNHIGKVIGVCKAYMTRVGNGDFPTELEDETGEKLGEIGHEFGATTGRKRRCGWLDLVALRYSLTISGVTELALTKLDVLDTFEEIKVCTSYMLDGKEIFDFPTEHQTLCRVQPVYKSLKGWMASNANAKSFAEMHPNAQAYVNFLEEATGVPVTFISVGPGRDETVFK.

Residues 22 to 28 (GDEGKGK) and 50 to 52 (GHT) contribute to the GTP site. The active-site Proton acceptor is the aspartate 23. Mg(2+)-binding residues include aspartate 23 and glycine 50. IMP-binding positions include 23-26 (DEGK), 48-51 (NAGH), threonine 140, arginine 154, glutamine 235, threonine 250, and arginine 314. Histidine 51 (proton donor) is an active-site residue. Position 310–316 (310–316 (ATTGRKR)) interacts with substrate. Residues arginine 316, 342-344 (KLD), and 424-426 (SVG) contribute to the GTP site.

The protein belongs to the adenylosuccinate synthetase family. As to quaternary structure, homodimer. The cofactor is Mg(2+).

Its subcellular location is the cytoplasm. The enzyme catalyses IMP + L-aspartate + GTP = N(6)-(1,2-dicarboxyethyl)-AMP + GDP + phosphate + 2 H(+). It participates in purine metabolism; AMP biosynthesis via de novo pathway; AMP from IMP: step 1/2. Plays an important role in the de novo pathway of purine nucleotide biosynthesis. Catalyzes the first committed step in the biosynthesis of AMP from IMP. The chain is Adenylosuccinate synthetase from Chlorobaculum parvum (strain DSM 263 / NCIMB 8327) (Chlorobium vibrioforme subsp. thiosulfatophilum).